The sequence spans 65 residues: Large ribosomal subunit protein uL29 (65 aa).

This sequence belongs to the universal ribosomal protein uL29 family.

This chain is Large ribosomal subunit protein uL29, found in Lactobacillus johnsonii (strain CNCM I-12250 / La1 / NCC 533).